The following is a 379-amino-acid chain: Probable leucine aminopeptidase ARB_01443 (379 aa).

The first 18 residues, 1–18 (MKIATLAVVSAFAATAIA), serve as a signal peptide directing secretion. Zn(2+) is bound by residues histidine 182 and aspartate 201. Asparagine 202 and asparagine 226 each carry an N-linked (GlcNAc...) asparagine glycan. Zn(2+) is bound by residues glutamate 240 and aspartate 267. Cysteine 312 and cysteine 316 form a disulfide bridge. A Zn(2+)-binding site is contributed by histidine 345.

The protein belongs to the peptidase M28 family. M28E subfamily. Monomer. Requires Zn(2+) as cofactor.

It localises to the secreted. Functionally, probable extracellular aminopeptidase which contributes to pathogenicity. In Arthroderma benhamiae (strain ATCC MYA-4681 / CBS 112371) (Trichophyton mentagrophytes), this protein is Probable leucine aminopeptidase ARB_01443.